We begin with the raw amino-acid sequence, 556 residues long: 2-isopropylmalate synthase (556 aa).

A Pyruvate carboxyltransferase domain is found at 33–307 (PIWLSTDLRD…DPQLDFSDID (275 aa)). Mg(2+) contacts are provided by Asp42, His246, His248, and Asn282. The regulatory domain stretch occupies residues 439–556 (ASAPYALKGH…ALSQAESRAA (118 aa)).

This sequence belongs to the alpha-IPM synthase/homocitrate synthase family. LeuA type 2 subfamily. As to quaternary structure, homodimer. Requires Mg(2+) as cofactor.

The protein localises to the cytoplasm. The enzyme catalyses 3-methyl-2-oxobutanoate + acetyl-CoA + H2O = (2S)-2-isopropylmalate + CoA + H(+). It functions in the pathway amino-acid biosynthesis; L-leucine biosynthesis; L-leucine from 3-methyl-2-oxobutanoate: step 1/4. Functionally, catalyzes the condensation of the acetyl group of acetyl-CoA with 3-methyl-2-oxobutanoate (2-ketoisovalerate) to form 3-carboxy-3-hydroxy-4-methylpentanoate (2-isopropylmalate). The polypeptide is 2-isopropylmalate synthase (Ectopseudomonas mendocina (strain ymp) (Pseudomonas mendocina)).